Consider the following 348-residue polypeptide: Chloroacetanilide N-alkylformylase, oxygenase component (348 aa).

The Rieske domain occupies Trp7 to Ala108. [2Fe-2S] cluster contacts are provided by Cys47, His49, Cys66, and His69. Residues His159 and His164 each contribute to the Fe cation site. Substrate is bound at residue His250. Asp293 lines the Fe cation pocket.

As to quaternary structure, the chloroacetanilide N-alkylformylase multicomponent enzyme system is composed of an oxygenase component (CndA) and an electron transfer component formed by a ferredoxin reductase (CndC1) and a ferredoxin (CndB1). In vitro, chloroacetanilide N-alkylformylase assays in which CndB1 is substituted for CndB2 demonstrate that the two enzymes possess nearly identical activities. The cofactor is [2Fe-2S] cluster.

The catalysed reaction is butachlor + 2 reduced [2Fe-2S]-[ferredoxin] + O2 + 2 H(+) = butyl formate + N-(2,6-diethylphenyl)-2-chloroacetamide + 2 oxidized [2Fe-2S]-[ferredoxin] + H2O. It carries out the reaction alachlor + 2 reduced [2Fe-2S]-[ferredoxin] + O2 + 2 H(+) = methyl formate + N-(2,6-diethylphenyl)-2-chloroacetamide + 2 oxidized [2Fe-2S]-[ferredoxin] + H2O. It catalyses the reaction acetochlor + 2 reduced [2Fe-2S]-[ferredoxin] + O2 + 2 H(+) = N-(2-ethyl-6-methylphenyl)-2-chloroacetamide + ethyl formate + 2 oxidized [2Fe-2S]-[ferredoxin] + H2O. With respect to regulation, activity enhanced by Fe(2+) and Mg(2+) ions. Divalent cations such as Ca(2+), Cr(2+), Co(2+), and Mn(2+) show moderate inhibition of the enzyme, whereas heavy metal ions such as Ag(+), Cu(2+), Pb(2+), Hg(2+), Ni(2+) and Zn(2+) severely inhibit the activity. Its function is as follows. Component of the chloroacetanilide N-alkylformylase multicomponent enzyme system involved in the degradation of chloroacetanilide herbicides (N-alkoxyalkyl-N-chloroacetyl-substituted aniline derivatives). In vitro, catalyzes the N-dealkylation of butachlor, alachlor and acetochlor to yield 2-chloro-N-(2,6-diethylphenyl)acetamide (CDEPA) (for alachlor and butachlor) and 2-chloro-N-(2-methyl-6-ethylphenyl)acetamide (CMEPA) (for acetochlor). The protein is Chloroacetanilide N-alkylformylase, oxygenase component of Rhizorhabdus wittichii (strain DC-6 / KACC 16600) (Sphingomonas wittichii).